A 265-amino-acid polypeptide reads, in one-letter code: Translation initiation factor 2 subunit alpha (265 aa).

Residues 12 to 82 (GELVIGTVKK…KMRVVEVSLK (71 aa)) enclose the S1 motif domain.

Belongs to the eIF-2-alpha family. Heterotrimer composed of an alpha, a beta and a gamma chain.

Functionally, eIF-2 functions in the early steps of protein synthesis by forming a ternary complex with GTP and initiator tRNA. The polypeptide is Translation initiation factor 2 subunit alpha (Pyrobaculum aerophilum (strain ATCC 51768 / DSM 7523 / JCM 9630 / CIP 104966 / NBRC 100827 / IM2)).